Reading from the N-terminus, the 61-residue chain is Small ribosomal subunit protein uS14 (61 aa).

Cys-24, Cys-27, Cys-40, and Cys-43 together coordinate Zn(2+).

It belongs to the universal ribosomal protein uS14 family. Zinc-binding uS14 subfamily. In terms of assembly, part of the 30S ribosomal subunit. Contacts proteins S3 and S10. Requires Zn(2+) as cofactor.

In terms of biological role, binds 16S rRNA, required for the assembly of 30S particles and may also be responsible for determining the conformation of the 16S rRNA at the A site. This Pseudothermotoga lettingae (strain ATCC BAA-301 / DSM 14385 / NBRC 107922 / TMO) (Thermotoga lettingae) protein is Small ribosomal subunit protein uS14.